We begin with the raw amino-acid sequence, 254 residues long: Alcohol dehydrogenase (254 aa).

10-33 (FVAGLGGIGLDTSRELVKRNLKNL) contributes to the NAD(+) binding site. Ser-138 provides a ligand contact to substrate. The active-site Proton acceptor is the Tyr-151.

It belongs to the short-chain dehydrogenases/reductases (SDR) family. As to quaternary structure, homodimer.

The catalysed reaction is a primary alcohol + NAD(+) = an aldehyde + NADH + H(+). It catalyses the reaction a secondary alcohol + NAD(+) = a ketone + NADH + H(+). In Drosophila persimilis (Fruit fly), this protein is Alcohol dehydrogenase (Adh).